Consider the following 397-residue polypeptide: Tryptophan synthase beta chain (397 aa).

Lys88 is subject to N6-(pyridoxal phosphate)lysine.

Belongs to the TrpB family. Tetramer of two alpha and two beta chains. Requires pyridoxal 5'-phosphate as cofactor.

The enzyme catalyses (1S,2R)-1-C-(indol-3-yl)glycerol 3-phosphate + L-serine = D-glyceraldehyde 3-phosphate + L-tryptophan + H2O. It participates in amino-acid biosynthesis; L-tryptophan biosynthesis; L-tryptophan from chorismate: step 5/5. Functionally, the beta subunit is responsible for the synthesis of L-tryptophan from indole and L-serine. The polypeptide is Tryptophan synthase beta chain (Haemophilus influenzae (strain 86-028NP)).